Reading from the N-terminus, the 244-residue chain is 3-deoxy-manno-octulosonate cytidylyltransferase (244 aa).

The protein belongs to the KdsB family.

Its subcellular location is the cytoplasm. The catalysed reaction is 3-deoxy-alpha-D-manno-oct-2-ulosonate + CTP = CMP-3-deoxy-beta-D-manno-octulosonate + diphosphate. It participates in nucleotide-sugar biosynthesis; CMP-3-deoxy-D-manno-octulosonate biosynthesis; CMP-3-deoxy-D-manno-octulosonate from 3-deoxy-D-manno-octulosonate and CTP: step 1/1. It functions in the pathway bacterial outer membrane biogenesis; lipopolysaccharide biosynthesis. Functionally, activates KDO (a required 8-carbon sugar) for incorporation into bacterial lipopolysaccharide in Gram-negative bacteria. This Rickettsia canadensis (strain McKiel) protein is 3-deoxy-manno-octulosonate cytidylyltransferase.